The chain runs to 145 residues: Transcription antitermination protein NusB (145 aa).

It belongs to the NusB family.

Its function is as follows. Involved in transcription antitermination. Required for transcription of ribosomal RNA (rRNA) genes. Binds specifically to the boxA antiterminator sequence of the ribosomal RNA (rrn) operons. In Psychromonas ingrahamii (strain DSM 17664 / CCUG 51855 / 37), this protein is Transcription antitermination protein NusB.